The primary structure comprises 118 residues: Large ribosomal subunit protein uL22 (118 aa).

Belongs to the universal ribosomal protein uL22 family. In terms of assembly, part of the 50S ribosomal subunit.

Its function is as follows. This protein binds specifically to 23S rRNA; its binding is stimulated by other ribosomal proteins, e.g. L4, L17, and L20. It is important during the early stages of 50S assembly. It makes multiple contacts with different domains of the 23S rRNA in the assembled 50S subunit and ribosome. In terms of biological role, the globular domain of the protein is located near the polypeptide exit tunnel on the outside of the subunit, while an extended beta-hairpin is found that lines the wall of the exit tunnel in the center of the 70S ribosome. The chain is Large ribosomal subunit protein uL22 from Chlorobium limicola (strain DSM 245 / NBRC 103803 / 6330).